The primary structure comprises 434 residues: Pre-B-cell leukemia transcription factor 3 (434 aa).

The disordered stretch occupies residues 20–41; it reads SVQGGMALPPPPHGHEGADGDG. Basic and acidic residues predominate over residues 32 to 41; sequence HGHEGADGDG. One can recognise a PBC domain in the interval 41-234; it reads GRKQDIGDIL…VMILRSRFLD (194 aa). Residues 48 to 127 are PBC-A; it reads DILHQIMTIT…EGVSGPEKGG (80 aa). The tract at residues 130–234 is PBC-B; the sequence is AAAAAAAAAS…VMILRSRFLD (105 aa). Residues 235-297 constitute a DNA-binding region (homeobox; TALE-type); sequence ARRKRRNFSK…NKRIRYKKNI (63 aa). The span at 326–341 shows a compositional bias: low complexity; sequence NQTNSPTTPNSGSSGS. Disordered regions lie at residues 326-349 and 405-434; these read NQTNSPTTPNSGSSGSFNLPNSGD and ANGGWQDATTPSSVTSPTEGPGSVHSDTSN. Residues 405-422 show a composition bias toward polar residues; that stretch reads ANGGWQDATTPSSVTSPT.

It belongs to the TALE/PBX homeobox family. Interacts with PBXIP1.

It localises to the nucleus. In terms of biological role, transcriptional activator that binds the sequence 5'-ATCAATCAA-3'. This Mus musculus (Mouse) protein is Pre-B-cell leukemia transcription factor 3 (Pbx3).